The primary structure comprises 248 residues: 3-deoxy-manno-octulosonate cytidylyltransferase (248 aa).

It belongs to the KdsB family.

It localises to the cytoplasm. The catalysed reaction is 3-deoxy-alpha-D-manno-oct-2-ulosonate + CTP = CMP-3-deoxy-beta-D-manno-octulosonate + diphosphate. It functions in the pathway nucleotide-sugar biosynthesis; CMP-3-deoxy-D-manno-octulosonate biosynthesis; CMP-3-deoxy-D-manno-octulosonate from 3-deoxy-D-manno-octulosonate and CTP: step 1/1. It participates in bacterial outer membrane biogenesis; lipopolysaccharide biosynthesis. Functionally, activates KDO (a required 8-carbon sugar) for incorporation into bacterial lipopolysaccharide in Gram-negative bacteria. The protein is 3-deoxy-manno-octulosonate cytidylyltransferase of Photobacterium profundum (strain SS9).